Here is a 1802-residue protein sequence, read N- to C-terminus: Signaling mucin HKR1 (1802 aa).

Positions 1-21 are cleaved as a signal peptide; it reads MVSLKIKKILLLVSLLNAIEA. Residues 22–1485 are Extracellular-facing; it reads YSNDTIYSTS…SASAGKYAVK (1464 aa). An N-linked (GlcNAc...) asparagine glycan is attached at Asn-24. Disordered stretches follow at residues 47–176 and 261–311; these read ISST…PREI and YSSS…VSRP. Positions 54–81 are enriched in polar residues; that stretch reads NKENAITSSSETTTMAGQYGESGSTTIM. Positions 88–107 are enriched in low complexity; sequence TSSQYISVTTTTQTSDTMSS. Over residues 113–143 the composition is skewed to polar residues; it reads EIATPSSSIVPTPLQSYSDESQISQTLSHNP. 2 stretches are compositionally biased toward low complexity: residues 145 to 172 and 261 to 302; these read SVAESDSDTTSSESSSSVIISTSDSSAV and YSSS…SESS. The 1; approximate repeat unit spans residues 453–480; it reads SVPVAVSSTYTSSPSASVVVPSAYASSP. A 12 X 28 AA tandem repeats of S-[AV]-[P]-V-A-V-S-S-T-Y-T-S-S-P-S-A-P-A-A-I-S-S-T-Y-T-S-S-P region spans residues 453 to 788; the sequence is SVPVAVSSTY…VLSSTSTSSP (336 aa). Repeat copies occupy residues 481–508, 509–536, 537–564, 565–592, 593–620, 621–648, 649–676, 677–704, 705–732, 733–760, and 761–788. 2 disordered regions span residues 961–984 and 1067–1165; these read SLQSQLSSSTKNPYDTANKNTETS and ETIP…SYSR. Polar residues-rich tracts occupy residues 970-984 and 1071-1123; these read TKNPYDTANKNTETS and ASKS…TNTK. Over residues 1136–1165 the composition is skewed to low complexity; sequence TMGENGEETGLTTTKTQYKSSSETSGSYSR. N-linked (GlcNAc...) asparagine glycosylation is found at Asn-1252, Asn-1293, Asn-1342, and Asn-1400. Residues 1486–1506 form a helical membrane-spanning segment; sequence IIIFLIVLTIGVLLWLFVAFF. Over 1507–1802 the chain is Cytoplasmic; the sequence is AFRHRNILLK…KQQNHQTTKI (296 aa). The disordered stretch occupies residues 1534–1559; sequence ESTELSRSSSGNQVYNEKPPESENES.

This sequence belongs to the HKR1/MSB2 family. Post-translationally, could be O-glycosylated in the serine/threonine-rich domain.

Its subcellular location is the cell membrane. Functionally, plasma membrane signaling mucin that promotes activation of the MAPK for the filamentous growth pathway. May regulate beta-glucan synthesis. Overexpression provides resistance to HM-1 killer toxin. The protein is Signaling mucin HKR1 (HKR1) of Saccharomyces cerevisiae (strain ATCC 204508 / S288c) (Baker's yeast).